The following is a 156-amino-acid chain: Aspartate 1-decarboxylase (156 aa).

The active-site Schiff-base intermediate with substrate; via pyruvic acid is Ser-26. Position 26 is a pyruvic acid (Ser) (Ser-26). Thr-58 is a substrate binding site. Tyr-59 functions as the Proton donor in the catalytic mechanism. 74–76 (GGA) is a binding site for substrate.

Belongs to the PanD family. In terms of assembly, heterooctamer of four alpha and four beta subunits. Requires pyruvate as cofactor. Is synthesized initially as an inactive proenzyme, which is activated by self-cleavage at a specific serine bond to produce a beta-subunit with a hydroxyl group at its C-terminus and an alpha-subunit with a pyruvoyl group at its N-terminus.

It is found in the cytoplasm. It catalyses the reaction L-aspartate + H(+) = beta-alanine + CO2. It participates in cofactor biosynthesis; (R)-pantothenate biosynthesis; beta-alanine from L-aspartate: step 1/1. Its function is as follows. Catalyzes the pyruvoyl-dependent decarboxylation of aspartate to produce beta-alanine. In Gloeothece citriformis (strain PCC 7424) (Cyanothece sp. (strain PCC 7424)), this protein is Aspartate 1-decarboxylase.